We begin with the raw amino-acid sequence, 209 residues long: Probable glutathione peroxidase 8-B (209 aa).

A helical transmembrane segment spans residues Val-18–Leu-40. The active site involves Cys-79.

Belongs to the glutathione peroxidase family.

It localises to the membrane. The enzyme catalyses 2 glutathione + H2O2 = glutathione disulfide + 2 H2O. The protein is Probable glutathione peroxidase 8-B (gpx8-b) of Xenopus laevis (African clawed frog).